The primary structure comprises 257 residues: UPF0246 protein CLH_2088 (257 aa).

It belongs to the UPF0246 family.

This is UPF0246 protein CLH_2088 from Clostridium botulinum (strain Alaska E43 / Type E3).